We begin with the raw amino-acid sequence, 115 residues long: Large ribosomal subunit protein uL22 (115 aa).

Belongs to the universal ribosomal protein uL22 family. In terms of assembly, part of the 50S ribosomal subunit.

This protein binds specifically to 23S rRNA; its binding is stimulated by other ribosomal proteins, e.g. L4, L17, and L20. It is important during the early stages of 50S assembly. It makes multiple contacts with different domains of the 23S rRNA in the assembled 50S subunit and ribosome. Its function is as follows. The globular domain of the protein is located near the polypeptide exit tunnel on the outside of the subunit, while an extended beta-hairpin is found that lines the wall of the exit tunnel in the center of the 70S ribosome. In Ligilactobacillus salivarius (strain UCC118) (Lactobacillus salivarius), this protein is Large ribosomal subunit protein uL22.